The chain runs to 181 residues: MPDTPKADIPSDNAALEAQGIASELIDDSAARIAELEAKNADLADAYLRAKAEADNIRRRADDDIAKSRKFAVESFAESLLPVKDSLEAAIVSHAAGKGSPEQVIEGVHATLRQLGQALERNKVLEVNPPAGTKFDPHQHQAISVVPAEQEANTVVAVLQKGYLIADRVLRPALVTVAAAK.

Belongs to the GrpE family. Homodimer.

It is found in the cytoplasm. Participates actively in the response to hyperosmotic and heat shock by preventing the aggregation of stress-denatured proteins, in association with DnaK and GrpE. It is the nucleotide exchange factor for DnaK and may function as a thermosensor. Unfolded proteins bind initially to DnaJ; upon interaction with the DnaJ-bound protein, DnaK hydrolyzes its bound ATP, resulting in the formation of a stable complex. GrpE releases ADP from DnaK; ATP binding to DnaK triggers the release of the substrate protein, thus completing the reaction cycle. Several rounds of ATP-dependent interactions between DnaJ, DnaK and GrpE are required for fully efficient folding. The chain is Protein GrpE from Leptothrix cholodnii (strain ATCC 51168 / LMG 8142 / SP-6) (Leptothrix discophora (strain SP-6)).